A 220-amino-acid polypeptide reads, in one-letter code: MRPSKKLLIAIISIFLISSVPVSAHADSTTIQQNKDTLSQIVVFPTGNYDKNEANAMVNRLANIDGKYLNALKQNNLKIKLLSGKLTDEKEYAYLKGVVPKGWEGTGKTWDDVPGLGGSTVALRIGFSNKGKGHDAINLELHETAHAIDHIVLNDISKSAQFKQIFAKEGRSLGNVNYLGVYPEEFFAESFAYYYLNQDTNSKLKSACPQTYSFLQNLAK.

Residues 1–26 form the signal peptide; the sequence is MRPSKKLLIAIISIFLISSVPVSAHA. Residues 35–220 enclose the ATLF-like domain; that stretch reads KDTLSQIVVF…TYSFLQNLAK (186 aa). 2 interacts with substrate peptide regions span residues 101 to 103 and 117 to 119; these read KGW and GGS. H142 provides a ligand contact to Zn(2+). E143 functions as the Proton acceptor in the catalytic mechanism. Residues H146, Y178, and E185 each contribute to the Zn(2+) site.

The protein belongs to the peptidase M34 family. Pro-Pro endopeptidase subfamily. Monomer. Requires Zn(2+) as cofactor.

The protein localises to the secreted. The enzyme catalyses The enzyme catalyzes the hydrolytic cleavage of peptide bonds between two proline residues.. Is inhibited by the chelating agent o-phenanthroline in vitro. In terms of biological role, zinc-dependent endoprotease with a unique preference for proline residues surrounding the scissile bond. Exhibits a high preference for an asparagine at the P2 position and hydrophobic residues (Val, Ile, Leu) at the P3 position. Efficiently cleaves the LPXTG cell surface proteins CD630_28310 and CD630_32460 at multiple cleavage sites in vivo. Has a role in the regulation of C.difficile adhesion versus motility by cleaving surface adhesion proteins such as the collagen binding protein CD630_28310, and is important for efficient infection. Is also able to cleave fibronectin and fibrinogen in vitro; cleaves at the N-terminus of the beta-chain of fibrinogen. Destabilizes the fibronectin network produced by human fibroblasts. Therefore, may be important in key steps of clostridial pathogenesis by degrading extracellular matrix components associated with the gut epithelial cells. To a lesser extent, IgA1, IgA2, and human HSP 90-beta, but not HSP 90-alpha, are also substrates for the enzyme. Is not active on different collagen types, casein and gelatin. This chain is Pro-Pro endopeptidase, found in Clostridioides difficile (strain 630) (Peptoclostridium difficile).